The sequence spans 366 residues: Phenylalanine--tRNA ligase alpha subunit (366 aa).

E259 provides a ligand contact to Mg(2+).

The protein belongs to the class-II aminoacyl-tRNA synthetase family. Phe-tRNA synthetase alpha subunit type 1 subfamily. As to quaternary structure, tetramer of two alpha and two beta subunits. It depends on Mg(2+) as a cofactor.

It localises to the cytoplasm. It catalyses the reaction tRNA(Phe) + L-phenylalanine + ATP = L-phenylalanyl-tRNA(Phe) + AMP + diphosphate + H(+). The sequence is that of Phenylalanine--tRNA ligase alpha subunit from Novosphingobium aromaticivorans (strain ATCC 700278 / DSM 12444 / CCUG 56034 / CIP 105152 / NBRC 16084 / F199).